We begin with the raw amino-acid sequence, 407 residues long: Guanine nucleotide-binding protein alpha-1 subunit (407 aa).

Residue Gly2 is the site of N-myristoyl glycine attachment. Cys3 is lipidated: S-palmitoyl cysteine. The G-alpha domain occupies Asn73–Phe407. The G1 motif stretch occupies residues Lys76–Thr89. Positions 84, 85, 86, 87, 88, 89, 190, 215, 221, 243, 309, 310, 312, and 380 each coordinate GTP. Thr88 provides a ligand contact to Mg(2+). Residues Asp213–Thr221 are G2 motif. Residue Thr221 participates in Mg(2+) binding. Residues Tyr236–Arg245 form a G3 motif region. Residues Ile305–Asp312 are G4 motif. A G5 motif region spans residues Thr378–Thr383.

The protein belongs to the G-alpha family. G(q) subfamily. As to quaternary structure, g proteins are composed of 3 units; alpha, beta and gamma. The alpha chain contains the guanine nucleotide binding site. The cofactor is Mg(2+).

Implicated in the mating and sporulation pathway. Probably coupled to mating-factor receptors. May act in concert with Ras1. This chain is Guanine nucleotide-binding protein alpha-1 subunit (gpa1), found in Schizosaccharomyces pombe (strain 972 / ATCC 24843) (Fission yeast).